The sequence spans 204 residues: Molybdenum cofactor guanylyltransferase (204 aa).

GTP is bound by residues 12–14 (LAG), Lys25, Asn53, Asp71, and Asp101. Asp101 contacts Mg(2+).

The protein belongs to the MobA family. In terms of assembly, monomer. Requires Mg(2+) as cofactor.

Its subcellular location is the cytoplasm. The catalysed reaction is Mo-molybdopterin + GTP + H(+) = Mo-molybdopterin guanine dinucleotide + diphosphate. Functionally, transfers a GMP moiety from GTP to Mo-molybdopterin (Mo-MPT) cofactor (Moco or molybdenum cofactor) to form Mo-molybdopterin guanine dinucleotide (Mo-MGD) cofactor. The protein is Molybdenum cofactor guanylyltransferase of Ralstonia pickettii (strain 12J).